Consider the following 191-residue polypeptide: Probable ribosome biogenesis protein RLP24 (191 aa).

Phosphoserine is present on Ser-136.

This sequence belongs to the eukaryotic ribosomal protein eL24 family. As to quaternary structure, associated with nucleolar and cytoplasmic pre-60S particles. At the end of biogenesis it dissociates from cytoplasmic pre-60S particles and is likely to be exchanged for its ribosomal homologue, RPL24.

It is found in the nucleus. The protein localises to the nucleolus. Involved in the biogenesis of the 60S ribosomal subunit. Ensures the docking of NOG1 to pre-60S particles. The sequence is that of Probable ribosome biogenesis protein RLP24 (RpL24-like) from Drosophila melanogaster (Fruit fly).